The sequence spans 275 residues: Putative carbamate hydrolase RutD (275 aa).

This sequence belongs to the AB hydrolase superfamily. Hydrolase RutD family.

The enzyme catalyses carbamate + 2 H(+) = NH4(+) + CO2. Involved in pyrimidine catabolism. May facilitate the hydrolysis of carbamate, a reaction that can also occur spontaneously. This Escherichia coli O6:H1 (strain CFT073 / ATCC 700928 / UPEC) protein is Putative carbamate hydrolase RutD.